The following is a 215-amino-acid chain: 3,4-dihydroxy-2-butanone 4-phosphate synthase (215 aa).

D-ribulose 5-phosphate is bound by residues 37–38 (RE), Asp-42, 150–154 (RPGHT), and Glu-174. Glu-38 contributes to the Mg(2+) binding site. His-153 contacts Mg(2+).

This sequence belongs to the DHBP synthase family. Homodimer. Mg(2+) is required as a cofactor. It depends on Mn(2+) as a cofactor.

It catalyses the reaction D-ribulose 5-phosphate = (2S)-2-hydroxy-3-oxobutyl phosphate + formate + H(+). The protein operates within cofactor biosynthesis; riboflavin biosynthesis; 2-hydroxy-3-oxobutyl phosphate from D-ribulose 5-phosphate: step 1/1. Its function is as follows. Catalyzes the conversion of D-ribulose 5-phosphate to formate and 3,4-dihydroxy-2-butanone 4-phosphate. In Buchnera aphidicola subsp. Acyrthosiphon pisum (strain 5A), this protein is 3,4-dihydroxy-2-butanone 4-phosphate synthase.